The following is a 352-amino-acid chain: MAMAALTSSSSAITLLNKPFLPNRSSFFSSDSQSPLLRFSASTSVRSRFPSAAISAVAPKSDINKNETPKIEIEETQVFACPVCYEPLMRKGPSGINLQAIYRSGFKCGQCNKTYSSKDEYLDLTVTADLDDYNEVKPITTELFRSPLVSFLYERGWRQAFKRSGFPGPDEEFRMAEEYFKEAEGGLLVDVSCGSGLFSRKFAQSGKYSGVIALDYSENMLRQCKEFIKNDNTFDNSTNIAVVRADVSRLPFPSGSVDAVHAGAALHCWPSPTNAIAEICRVLRSGGVFVGTTFLRYSPSTPWIIRPFQSRILQSYNYLMQDEIKDVCTSCGLTDYEDYIQDSFIMFTARKP.

The N-terminal 55 residues, 1–55, are a transit peptide targeting the chloroplast; sequence MAMAALTSSSSAITLLNKPFLPNRSSFFSSDSQSPLLRFSASTSVRSRFPSAAIS.

Belongs to the methyltransferase superfamily.

Its subcellular location is the plastid. The protein localises to the chloroplast. It localises to the plastoglobule. This is an uncharacterized protein from Arabidopsis thaliana (Mouse-ear cress).